We begin with the raw amino-acid sequence, 263 residues long: Chymotrypsinogen B (263 aa).

Positions 1–18 (MASLWLLSCFSLVGAAFG) are cleaved as a signal peptide. Disulfide bonds link Cys19–Cys140, Cys60–Cys76, Cys154–Cys219, Cys186–Cys200, and Cys209–Cys238. Residues 34 to 261 (IVNGEDAVPG…LIPWVQKILA (228 aa)) form the Peptidase S1 domain. His75 (charge relay system) is an active-site residue. Ser93 carries the phosphoserine modification. The Charge relay system role is filled by Asp120. Catalysis depends on Ser213, which acts as the Charge relay system.

The protein belongs to the peptidase S1 family.

It is found in the secreted. It localises to the extracellular space. The enzyme catalyses Preferential cleavage: Tyr-|-Xaa, Trp-|-Xaa, Phe-|-Xaa, Leu-|-Xaa.. The chain is Chymotrypsinogen B from Homo sapiens (Human).